The primary structure comprises 247 residues: Aliphatic sulfonates import ATP-binding protein SsuB 1 (247 aa).

The 216-residue stretch at 7 to 222 folds into the ABC transporter domain; it reads LSLSGVHKSF…KRSSYEFVET (216 aa). Residue 39-46 coordinates ATP; that stretch reads GKSGCGKS.

It belongs to the ABC transporter superfamily. Aliphatic sulfonates importer (TC 3.A.1.17.2) family. As to quaternary structure, the complex is composed of two ATP-binding proteins (SsuB), two transmembrane proteins (SsuC) and a solute-binding protein (SsuA).

It localises to the cell membrane. The enzyme catalyses ATP + H2O + aliphatic sulfonate-[sulfonate-binding protein]Side 1 = ADP + phosphate + aliphatic sulfonateSide 2 + [sulfonate-binding protein]Side 1.. Functionally, part of the ABC transporter complex SsuABC involved in aliphatic sulfonates import. Responsible for energy coupling to the transport system. The protein is Aliphatic sulfonates import ATP-binding protein SsuB 1 of Shouchella clausii (strain KSM-K16) (Alkalihalobacillus clausii).